The chain runs to 536 residues: Arylsulfatase K (536 aa).

The N-terminal stretch at 1 to 24 is a signal peptide; that stretch reads MIQKCIALSLFLFSALPEDNIVRA. Asp42 and Cys82 together coordinate Ca(2+). The Nucleophile role is filled by Cys82. A 3-oxoalanine (Cys) modification is found at Cys82. Lys130 is a binding site for substrate. Asn195 is a glycosylation site (N-linked (GlcNAc...) asparagine). His253 serves as a coordination point for substrate. Asn264 is a glycosylation site (N-linked (GlcNAc...) asparagine). Residues Asp315 and His316 each coordinate Ca(2+). 3 N-linked (GlcNAc...) asparagine glycosylation sites follow: Asn377, Asn416, and Asn501.

This sequence belongs to the sulfatase family. Ca(2+) is required as a cofactor. Post-translationally, the conversion to 3-oxoalanine (also known as C-formylglycine, FGly), of a serine or cysteine residue in prokaryotes and of a cysteine residue in eukaryotes, is critical for catalytic activity.

The protein localises to the secreted. It localises to the lysosome. It catalyses the reaction an aryl sulfate + H2O = a phenol + sulfate + H(+). The catalysed reaction is Hydrolysis of the 2-sulfate groups of the 2-O-sulfo-D-glucuronate residues of chondroitin sulfate, heparin and heparitin sulfate.. Functionally, catalyzes the hydrolysis of pseudosubstrates such as p-nitrocatechol sulfate and p-nitrophenyl sulfate. Catalyzes the hydrolysis of the 2-sulfate groups of the 2-O-sulfo-D-glucuronate residues of chondroitin sulfate, heparin and heparitin sulfate. Acts selectively on 2-sulfoglucuronate and lacks activity against 2-sulfoiduronate. This Xenopus laevis (African clawed frog) protein is Arylsulfatase K (arsk).